Consider the following 237-residue polypeptide: Ribonuclease PH (237 aa).

Phosphate-binding positions include arginine 86 and 124-126; that span reads GTR.

The protein belongs to the RNase PH family. In terms of assembly, homohexameric ring arranged as a trimer of dimers.

The catalysed reaction is tRNA(n+1) + phosphate = tRNA(n) + a ribonucleoside 5'-diphosphate. Its function is as follows. Phosphorolytic 3'-5' exoribonuclease that plays an important role in tRNA 3'-end maturation. Removes nucleotide residues following the 3'-CCA terminus of tRNAs; can also add nucleotides to the ends of RNA molecules by using nucleoside diphosphates as substrates, but this may not be physiologically important. Probably plays a role in initiation of 16S rRNA degradation (leading to ribosome degradation) during starvation. This Nitrobacter winogradskyi (strain ATCC 25391 / DSM 10237 / CIP 104748 / NCIMB 11846 / Nb-255) protein is Ribonuclease PH.